The primary structure comprises 345 residues: Polyprenyl transferase dpmpC (345 aa).

The next 8 membrane-spanning stretches (helical) occupy residues 24–44 (PVFA…ARLA), 60–80 (GLCF…NDWV), 101–121 (VTTF…WYLL), 183–203 (LYVY…VIGW), 220–240 (CLPL…AYSY), 261–281 (HLHL…LLFL), 286–306 (SFWL…EQLI), and 319–339 (LHKS…VELL).

It belongs to the UbiA prenyltransferase family. Mg(2+) is required as a cofactor.

It is found in the membrane. It participates in secondary metabolite biosynthesis; terpenoid biosynthesis. Polyprenyl transferase; part of the gene cluster that mediates the biosynthesis of diterpenoid pyrones. The first step of the pathway is the synthesis of the alpha-pyrone moiety by the polyketide synthase dpmpA via condensation of one acetyl-CoA starter unit with 3 malonyl-CoA units and 2 methylations. The alpha-pyrone is then combined with geranylgeranyl pyrophosphate (GGPP) formed by the GGPP synthase dpmpD through the action of the prenyltransferase dpmpC to yield a linear alpha-pyrone diterpenoid. Subsequent steps in the diterpenoid pyrone biosynthetic pathway involve the decalin core formation, which is initiated by the epoxidation of the C10-C11 olefin by the FAD-dependent oxidoreductase dpmpE, and is followed by a cyclization cascade catalyzed by the terpene cyclase dpmpB. The short chain dehydrogenase/reductase dpmpG then oxidizes the 8S hydroxy group to a ketone and the short chain dehydrogenase/reductase dpmpH reduces the ketone to the 8R hydroxy group to yield higginsianin B. Higginsianin B is further methylated by the methyltransferase dpmpI to produce the intermediate named FDDP B. The cytochrome P450 monooxygenase dpmpJ then oxidizes the C-26 methyl to primary alcohol, producing the final diterpenoid pyrone with a C-26 primary alcohol on the gamma-pyrone moiety named FDDP C. The protein is Polyprenyl transferase dpmpC of Macrophomina phaseolina (strain MS6) (Charcoal rot fungus).